The following is an 84-amino-acid chain: Large ribosomal subunit protein bL27 (84 aa).

The segment at 1–22 (MAHKKGASSTRNGRDSNAQRLG) is disordered. Residues 7–19 (ASSTRNGRDSNAQ) are compositionally biased toward polar residues.

This sequence belongs to the bacterial ribosomal protein bL27 family.

This is Large ribosomal subunit protein bL27 from Streptomyces avermitilis (strain ATCC 31267 / DSM 46492 / JCM 5070 / NBRC 14893 / NCIMB 12804 / NRRL 8165 / MA-4680).